Reading from the N-terminus, the 403-residue chain is MPIQPFDQREWNEPMHSLRISVGGLPVLASMTKATDPRFRPRWRVILTSFVGAALLWLLYSHHQGPVPGRPPTHNAHNWRLSQQRISHYNDTYPLSPPQRTPGGIRYRIAVIADLDTGSRAQEENTWFSYLKKGYLTLSDSGDRVSVEWDKDHGVLESHLAEKGRGMELSDLIVFNGKLYSVDDRTGVIYQIEGTKAVPWVILSDGDGTVEKGFKAEWLAVKDEHLYVGGLGKEWTTTTGEVMNENPEWVKVVGHRGSVDHENWVSSYNALRAAAGIRPPGYLIHESACWSDTLQRWFFLPRRASHERYSEKDDERKGSNLLLSAAQDFRDISVRQVGTLIPTHGFSSFKFIPNTDDQIIVALKSEEDNGRIATYVMAFTLDGRFLLPETKIGTVKYEGIEFI.

At 1–44 (MPIQPFDQREWNEPMHSLRISVGGLPVLASMTKATDPRFRPRWR) the chain is on the cytoplasmic side. A helical; Signal-anchor for type II membrane protein membrane pass occupies residues 45–61 (VILTSFVGAALLWLLYS). Residues 62-403 (HHQGPVPGRP…TVKYEGIEFI (342 aa)) lie on the Lumenal side of the membrane. N-linked (GlcNAc...) asparagine glycosylation occurs at Asn90. Positions 170, 171, 217, 286, 347, and 398 each coordinate Ca(2+).

Belongs to the apyrase family. As to quaternary structure, monomer. Homodimer; dimerization is Ca(2+)-dependent. Requires Ca(2+) as cofactor.

Its subcellular location is the endoplasmic reticulum membrane. It is found in the golgi apparatus. The protein localises to the golgi stack membrane. It catalyses the reaction a ribonucleoside 5'-diphosphate + H2O = a ribonucleoside 5'-phosphate + phosphate + H(+). In terms of biological role, calcium-dependent nucleotidase with a preference for UDP. The order of activity with different substrates is UDP &gt; GDP &gt; IDP &gt;&gt; UTP &gt; CDP = GTP = ITP. Has very low activity towards ADP and even lower activity towards ATP. Does not hydrolyze AMP and GMP. Involved in proteoglycan synthesis. This chain is Soluble calcium-activated nucleotidase 1 (Cant1), found in Mus musculus (Mouse).